The primary structure comprises 221 residues: Guanylate kinase (221 aa).

One can recognise a Guanylate kinase-like domain in the interval 18-196; it reads GFLFILSSPS…SASLIKSIYL (179 aa). 25–32 is a binding site for ATP; sequence SPSGAGKS.

It belongs to the guanylate kinase family.

It is found in the cytoplasm. It carries out the reaction GMP + ATP = GDP + ADP. Its function is as follows. Essential for recycling GMP and indirectly, cGMP. This is Guanylate kinase from Bartonella quintana (strain Toulouse) (Rochalimaea quintana).